The chain runs to 267 residues: Diphthine--ammonia ligase (267 aa).

Tyr-97 is modified (phosphotyrosine).

It belongs to the Diphthine--ammonia ligase family.

The catalysed reaction is diphthine-[translation elongation factor 2] + NH4(+) + ATP = diphthamide-[translation elongation factor 2] + AMP + diphosphate + H(+). It participates in protein modification; peptidyl-diphthamide biosynthesis. In terms of biological role, amidase that may catalyze the last step of diphthamide biosynthesis using ammonium and ATP. Diphthamide biosynthesis consists in the conversion of an L-histidine residue in the translation elongation factor (EEF2) to diphthamide. This Homo sapiens (Human) protein is Diphthine--ammonia ligase.